We begin with the raw amino-acid sequence, 158 residues long: Cystin-1 (158 aa).

A disordered region spans residues 1 to 146; sequence MGSGSSRSSR…AAISYDHSEE (146 aa). G2 carries N-myristoyl glycine lipidation. Composition is skewed to low complexity over residues 19-32 and 39-52; these read ESLP…ALEG and PVAA…AAEE. Positions 29–33 match the Ciliary targeting motif motif; the sequence is ALEGG. A compositionally biased stretch (basic and acidic residues) spans 65–75; sequence DGRDETLRLLD.

In terms of assembly, interacts (when myristoylated) with UNC119 and UNC119B; interaction is required for localization to cilium. In terms of tissue distribution, expressed at high levels in the kidney and pancreas. Moderate expression seen in the skeletal muscle, liver and heart. A weak expression seen in the brain, lung, uterus, prostate, testis, small intestine and colon.

It localises to the cell projection. It is found in the cilium membrane. The protein localises to the cytoplasm. Its subcellular location is the cytoskeleton. The protein resides in the cilium axoneme. The sequence is that of Cystin-1 (CYS1) from Homo sapiens (Human).